Reading from the N-terminus, the 430-residue chain is Uric acid permease PucK (430 aa).

A run of 14 helical transmembrane segments spans residues 18–38 (MLAM…AIGL), 43–63 (LTYL…LQLW), 67–87 (YFGI…GPMI), 97–117 (AIYG…GFFG), 122–142 (FFPP…LIPT), 163–183 (LLGF…KGFI), 185–205 (SIAI…MGKV), 209–229 (EVLE…PPTF), 233–253 (AVVT…GVYF), 274–294 (AEGL…TAFS), 310–330 (VIAI…AAAL), 333–353 (VIPT…VISY), 369–389 (LLII…PALF), and 398–418 (VLAG…HAFF).

It belongs to the nucleobase:cation symporter-2 (NCS2) (TC 2.A.40) family.

The protein resides in the cell membrane. Its function is as follows. Uptake of uric acid. The protein is Uric acid permease PucK (pucK) of Bacillus subtilis (strain 168).